A 386-amino-acid polypeptide reads, in one-letter code: Phosphoglycerate kinase (386 aa).

Substrate contacts are provided by residues 21–23 (DLN), arginine 36, 59–62 (HLGR), arginine 113, and arginine 146. ATP-binding positions include lysine 197, glutamate 313, and 339 to 342 (GGDT).

It belongs to the phosphoglycerate kinase family. As to quaternary structure, monomer.

The protein resides in the cytoplasm. It carries out the reaction (2R)-3-phosphoglycerate + ATP = (2R)-3-phospho-glyceroyl phosphate + ADP. Its pathway is carbohydrate degradation; glycolysis; pyruvate from D-glyceraldehyde 3-phosphate: step 2/5. The chain is Phosphoglycerate kinase from Serratia proteamaculans (strain 568).